The primary structure comprises 508 residues: Maturase K (508 aa).

The protein belongs to the intron maturase 2 family. MatK subfamily.

The protein resides in the plastid. Its subcellular location is the chloroplast. In terms of biological role, usually encoded in the trnK tRNA gene intron. Probably assists in splicing its own and other chloroplast group II introns. In Huidobria chilensis (Loasa chilensis), this protein is Maturase K.